Consider the following 647-residue polypeptide: uncharacterized protein (647 aa).

5 consecutive transmembrane segments (helical) span residues 14-38 (LFPI…LAVW), 61-78 (VVAL…TTLF), 90-110 (LWLT…PAFI), 140-158 (LSAV…VIYW), and 178-195 (VIAL…RSSF).

It localises to the cell membrane. This is an uncharacterized protein from Haemophilus influenzae (strain ATCC 51907 / DSM 11121 / KW20 / Rd).